Reading from the N-terminus, the 1058-residue chain is Carbamoyl phosphate synthase large chain (1058 aa).

The tract at residues 1–401 (MPKRKDIQKI…SLLKACRSLE (401 aa)) is carboxyphosphate synthetic domain. 12 residues coordinate ATP: Arg129, Arg169, Gly175, Gly176, Arg208, Ile210, Glu215, Gly241, Ile242, His243, Gln284, and Glu298. The region spanning 133 to 327 (KQLMQELDQP…IAKLAAKIAV (195 aa)) is the ATP-grasp 1 domain. Mg(2+)-binding residues include Gln284, Glu298, and Asn300. Mn(2+) is bound by residues Gln284, Glu298, and Asn300. The oligomerization domain stretch occupies residues 402 to 546 (IGVCHNEMTS…YSTYELENES (145 aa)). Positions 547–929 (VQSNKESILV…ALYKAFEANN (383 aa)) are carbamoyl phosphate synthetic domain. The ATP-grasp 2 domain occupies 671 to 861 (EKALKELGIP…MAQIATKLIL (191 aa)). ATP-binding residues include Arg707, Ser746, Ile748, Glu752, Gly777, Val778, His779, Ser780, Gln820, and Glu832. Mg(2+)-binding residues include Gln820, Glu832, and Asn834. Mn(2+) is bound by residues Gln820, Glu832, and Asn834. Residues 930–1058 (SHLSEFGQIV…ESRCFNIEAI (129 aa)) form the MGS-like domain. Positions 930-1058 (SHLSEFGQIV…ESRCFNIEAI (129 aa)) are allosteric domain.

It belongs to the CarB family. In terms of assembly, composed of two chains; the small (or glutamine) chain promotes the hydrolysis of glutamine to ammonia, which is used by the large (or ammonia) chain to synthesize carbamoyl phosphate. Tetramer of heterodimers (alpha,beta)4. It depends on Mg(2+) as a cofactor. The cofactor is Mn(2+).

It catalyses the reaction hydrogencarbonate + L-glutamine + 2 ATP + H2O = carbamoyl phosphate + L-glutamate + 2 ADP + phosphate + 2 H(+). It carries out the reaction hydrogencarbonate + NH4(+) + 2 ATP = carbamoyl phosphate + 2 ADP + phosphate + 2 H(+). It functions in the pathway amino-acid biosynthesis; L-arginine biosynthesis; carbamoyl phosphate from bicarbonate: step 1/1. Its pathway is pyrimidine metabolism; UMP biosynthesis via de novo pathway; (S)-dihydroorotate from bicarbonate: step 1/3. Its function is as follows. Large subunit of the glutamine-dependent carbamoyl phosphate synthetase (CPSase). CPSase catalyzes the formation of carbamoyl phosphate from the ammonia moiety of glutamine, carbonate, and phosphate donated by ATP, constituting the first step of 2 biosynthetic pathways, one leading to arginine and/or urea and the other to pyrimidine nucleotides. The large subunit (synthetase) binds the substrates ammonia (free or transferred from glutamine from the small subunit), hydrogencarbonate and ATP and carries out an ATP-coupled ligase reaction, activating hydrogencarbonate by forming carboxy phosphate which reacts with ammonia to form carbamoyl phosphate. This chain is Carbamoyl phosphate synthase large chain, found in Streptococcus pyogenes serotype M6 (strain ATCC BAA-946 / MGAS10394).